We begin with the raw amino-acid sequence, 119 residues long: Large ribosomal subunit protein bL19 (119 aa).

It belongs to the bacterial ribosomal protein bL19 family.

This protein is located at the 30S-50S ribosomal subunit interface and may play a role in the structure and function of the aminoacyl-tRNA binding site. The sequence is that of Large ribosomal subunit protein bL19 from Leuconostoc mesenteroides subsp. mesenteroides (strain ATCC 8293 / DSM 20343 / BCRC 11652 / CCM 1803 / JCM 6124 / NCDO 523 / NBRC 100496 / NCIMB 8023 / NCTC 12954 / NRRL B-1118 / 37Y).